The sequence spans 211 residues: Thiamine-phosphate synthase (211 aa).

4-amino-2-methyl-5-(diphosphooxymethyl)pyrimidine-binding positions include 37–41 (QLRIK) and Asn69. 2 residues coordinate Mg(2+): Asp70 and Asp89. Residue Ser108 participates in 4-amino-2-methyl-5-(diphosphooxymethyl)pyrimidine binding. 134–136 (TQT) serves as a coordination point for 2-[(2R,5Z)-2-carboxy-4-methylthiazol-5(2H)-ylidene]ethyl phosphate. Lys137 is a binding site for 4-amino-2-methyl-5-(diphosphooxymethyl)pyrimidine. 2-[(2R,5Z)-2-carboxy-4-methylthiazol-5(2H)-ylidene]ethyl phosphate-binding positions include Gly166 and 186 to 187 (VS).

It belongs to the thiamine-phosphate synthase family. Requires Mg(2+) as cofactor.

It carries out the reaction 2-[(2R,5Z)-2-carboxy-4-methylthiazol-5(2H)-ylidene]ethyl phosphate + 4-amino-2-methyl-5-(diphosphooxymethyl)pyrimidine + 2 H(+) = thiamine phosphate + CO2 + diphosphate. The catalysed reaction is 2-(2-carboxy-4-methylthiazol-5-yl)ethyl phosphate + 4-amino-2-methyl-5-(diphosphooxymethyl)pyrimidine + 2 H(+) = thiamine phosphate + CO2 + diphosphate. It catalyses the reaction 4-methyl-5-(2-phosphooxyethyl)-thiazole + 4-amino-2-methyl-5-(diphosphooxymethyl)pyrimidine + H(+) = thiamine phosphate + diphosphate. It participates in cofactor biosynthesis; thiamine diphosphate biosynthesis; thiamine phosphate from 4-amino-2-methyl-5-diphosphomethylpyrimidine and 4-methyl-5-(2-phosphoethyl)-thiazole: step 1/1. Functionally, condenses 4-methyl-5-(beta-hydroxyethyl)thiazole monophosphate (THZ-P) and 2-methyl-4-amino-5-hydroxymethyl pyrimidine pyrophosphate (HMP-PP) to form thiamine monophosphate (TMP). The polypeptide is Thiamine-phosphate synthase (Salmonella paratyphi A (strain ATCC 9150 / SARB42)).